A 2561-amino-acid chain; its full sequence is Plipastatin synthase subunit A (2561 aa).

The interval 1 to 1038 (MSEHTYSLTH…ATVIREGTDS (1038 aa)) is domain 1 (glutamate-activating). Residues 2 to 300 (SEHTYSLTHA…SSLPIRITVD (299 aa)) are condensation 1. The tract at residues 485–888 (TYAELDMYAS…SIEGVREAAV (404 aa)) is adenylation 1. Residues 961–1036 (APRNVTEMKL…GLATVIREGT (76 aa)) form the Carrier 1 domain. Serine 996 bears the O-(pantetheine 4'-phosphoryl)serine mark. The segment at 1048–1338 (KQETYPVSSA…NTLALRTRPE (291 aa)) is condensation 2. Residues 1048–2554 (KQETYPVSSA…ELTLSALSSI (1507 aa)) form a domain 2 (D-ornithine-activating) region. The segment at 1525 to 1932 (SYRLLNERAN…QTGLVREAAV (408 aa)) is adenylation 2. In terms of domain architecture, Carrier 2 spans 2007 to 2081 (APVNDLQKTM…ELCGHITPLA (75 aa)). Position 2042 is an O-(pantetheine 4'-phosphoryl)serine (serine 2042). The tract at residues 2089 to 2554 (AEGEAELTPI…ELTLSALSSI (466 aa)) is epimerization.

This sequence belongs to the ATP-dependent AMP-binding enzyme family. Requires pantetheine 4'-phosphate as cofactor.

Its function is as follows. This protein is a multifunctional enzyme, able to activate and polymerize the amino acids Glu and Orn as part of the biosynthesis of the lipopeptide antibiotic lipastatin. The Orn residue is further epimerized to the D-isomer form. The activation sites for these amino acids consist of individual domains. This chain is Plipastatin synthase subunit A (ppsA), found in Bacillus subtilis (strain 168).